We begin with the raw amino-acid sequence, 290 residues long: Pantothenate synthetase (290 aa).

30 to 37 (MGALHEGH) lines the ATP pocket. The Proton donor role is filled by histidine 37. Glutamine 61 is a binding site for (R)-pantoate. Glutamine 61 contributes to the beta-alanine binding site. 147–150 (GEKD) is a binding site for ATP. Residue glutamine 153 coordinates (R)-pantoate. ATP contacts are provided by residues valine 176 and 184–187 (KSSR).

It belongs to the pantothenate synthetase family. Homodimer.

The protein localises to the cytoplasm. It carries out the reaction (R)-pantoate + beta-alanine + ATP = (R)-pantothenate + AMP + diphosphate + H(+). The protein operates within cofactor biosynthesis; (R)-pantothenate biosynthesis; (R)-pantothenate from (R)-pantoate and beta-alanine: step 1/1. Catalyzes the condensation of pantoate with beta-alanine in an ATP-dependent reaction via a pantoyl-adenylate intermediate. This chain is Pantothenate synthetase, found in Chlorobium chlorochromatii (strain CaD3).